The sequence spans 322 residues: Eukaryotic translation initiation factor 3 subunit I (322 aa).

WD repeat units lie at residues 4–43 (GHERSITQIKYNREGDLLFSSSKDQKPNVWYSLNGERLGT), 46–85 (GHQGAVWCLDVDWESRKLITAGGDMTAKLWDVEYGTVIAS), 141–180 (MTESKITSMLWGPLDETIITGHDNGNIAIWDVRKGQKVVD), 184–223 (DHTGVINDMQLSKDGTMFVTASKDATAKLFDSETLMCLKT), and 281–322 (GHFG…NIFE).

This sequence belongs to the eIF-3 subunit I family. In terms of assembly, component of the eukaryotic translation initiation factor 3 (eIF-3) complex. The eIF-3 complex interacts with pix.

Its subcellular location is the cytoplasm. In terms of biological role, component of the eukaryotic translation initiation factor 3 (eIF-3) complex, which is involved in protein synthesis of a specialized repertoire of mRNAs and, together with other initiation factors, stimulates binding of mRNA and methionyl-tRNAi to the 40S ribosome. The eIF-3 complex specifically targets and initiates translation of a subset of mRNAs involved in cell proliferation. This is Eukaryotic translation initiation factor 3 subunit I from Drosophila willistoni (Fruit fly).